Reading from the N-terminus, the 157-residue chain is Isotocin-neurophysin IT 1 (157 aa).

Residues 1-20 (MFGTSVSALCLLFLLSVCTA) form the signal peptide. C21 and C26 are joined by a disulfide. At G29 the chain carries Glycine amide. 7 disulfide bridges follow: C42–C86, C45–C59, C53–C76, C60–C66, C93–C106, C100–C118, and C107–C112.

Belongs to the vasopressin/oxytocin family. In terms of processing, seven disulfide bonds are present in neurophysin.

The protein resides in the secreted. Functionally, isotocin causes contraction of smooth muscles. In Oncorhynchus masou (Cherry salmon), this protein is Isotocin-neurophysin IT 1.